Reading from the N-terminus, the 39-residue chain is Small basic protein 1 (39 aa).

A Pyrrolidone carboxylic acid modification is found at Q1. Intrachain disulfides connect C6–C32, C10–C26, and C14–C31.

The protein resides in the secreted. The chain is Small basic protein 1 from Anas platyrhynchos (Mallard).